A 204-amino-acid chain; its full sequence is Glycerol-3-phosphate acyltransferase (204 aa).

Transmembrane regions (helical) follow at residues 6-26, 80-100, 122-142, 144-164, and 168-188; these read YIII…YIVA, LVGI…VAGH, LAVN…VVAI, KYVS…MIMV, and AGLI…RANI.

The protein belongs to the PlsY family. Probably interacts with PlsX.

The protein resides in the cell membrane. It carries out the reaction an acyl phosphate + sn-glycerol 3-phosphate = a 1-acyl-sn-glycero-3-phosphate + phosphate. The protein operates within lipid metabolism; phospholipid metabolism. Catalyzes the transfer of an acyl group from acyl-phosphate (acyl-PO(4)) to glycerol-3-phosphate (G3P) to form lysophosphatidic acid (LPA). This enzyme utilizes acyl-phosphate as fatty acyl donor, but not acyl-CoA or acyl-ACP. The polypeptide is Glycerol-3-phosphate acyltransferase (Clostridioides difficile (strain 630) (Peptoclostridium difficile)).